The chain runs to 350 residues: Protein Wnt-8b (350 aa).

An N-terminal signal peptide occupies residues 1–21 (MFLMKPVCVLLVTCVLHRSHA). A disulfide bond links cysteine 53 and cysteine 64. The N-linked (GlcNAc...) asparagine glycan is linked to asparagine 102. 10 disulfide bridges follow: cysteine 103–cysteine 111, cysteine 113–cysteine 131, cysteine 179–cysteine 193, cysteine 181–cysteine 188, cysteine 255–cysteine 293, cysteine 271–cysteine 286, cysteine 290–cysteine 332, cysteine 308–cysteine 323, cysteine 310–cysteine 320, and cysteine 315–cysteine 316. Serine 185 is lipidated: O-palmitoleoyl serine. An N-linked (GlcNAc...) asparagine glycan is attached at asparagine 258.

The protein belongs to the Wnt family. Palmitoleoylation is required for efficient binding to frizzled receptors. Depalmitoleoylation leads to Wnt signaling pathway inhibition. In terms of processing, proteolytic processing by TIKI1 and TIKI2 promotes oxidation and formation of large disulfide-bond oligomers, leading to inactivation of WNT8B.

It localises to the secreted. The protein resides in the extracellular space. Its subcellular location is the extracellular matrix. Functionally, ligand for members of the frizzled family of seven transmembrane receptors. May play an important role in the development and differentiation of certain forebrain structures, notably the hippocampus. This is Protein Wnt-8b (Wnt8b) from Mus musculus (Mouse).